An 845-amino-acid polypeptide reads, in one-letter code: Putative DEAD-box ATP-dependent RNA helicase 33 (845 aa).

Disordered regions lie at residues 129-149 (GHPD…PMSP) and 282-302 (KFRK…NEGK). The segment covering 289 to 298 (STEEDSDEEG) has biased composition (acidic residues). The Q motif motif lies at 375–403 (KRFDESCISPLTLKALSASGIVKMTRVQD). The region spanning 406 to 590 (LSECLDGKDA…QLVLKRDHSY (185 aa)) is the Helicase ATP-binding domain. 419 to 426 (AKTGTGKS) provides a ligand contact to ATP. Positions 538–541 (DEAD) match the DEAD box motif. The 155-residue stretch at 624-778 (LLKEHINNMP…QVDQSMAKID (155 aa)) folds into the Helicase C-terminal domain.

The protein belongs to the DEAD box helicase family.

It carries out the reaction ATP + H2O = ADP + phosphate + H(+). This Arabidopsis thaliana (Mouse-ear cress) protein is Putative DEAD-box ATP-dependent RNA helicase 33 (RH33).